The chain runs to 224 residues: Large ribosomal subunit protein uL4 (224 aa).

The disordered stretch occupies residues 54 to 73; it reads NRSEVSHSTKKPFRQKGTGN.

Belongs to the universal ribosomal protein uL4 family. Part of the 50S ribosomal subunit.

In terms of biological role, one of the primary rRNA binding proteins, this protein initially binds near the 5'-end of the 23S rRNA. It is important during the early stages of 50S assembly. It makes multiple contacts with different domains of the 23S rRNA in the assembled 50S subunit and ribosome. Forms part of the polypeptide exit tunnel. In Chlamydia felis (strain Fe/C-56) (Chlamydophila felis), this protein is Large ribosomal subunit protein uL4.